Here is a 259-residue protein sequence, read N- to C-terminus: TCF3 fusion partner homolog (259 aa).

Disordered regions lie at residues 50–72 and 141–210; these read GGLGDSGLRERDEEEEAARGRRR and EDDG…APVQ. Ser167 carries the post-translational modification Phosphoserine. The segment covering 167 to 178 has biased composition (polar residues); it reads SPSQRTTATLDP. A Phosphothreonine modification is found at Thr172. Phosphoserine is present on residues Ser180 and Ser188. Phosphothreonine is present on Thr203. Lys222 is covalently cross-linked (Glycyl lysine isopeptide (Lys-Gly) (interchain with G-Cter in SUMO2)). Ser255 carries the phosphoserine modification.

As to quaternary structure, interacts with NOL3; translocates NOL3 into the nucleus and negatively regulated TFPT-induced cell death. Component of the chromatin remodeling INO80 complex; specifically part of a complex module associated with the N-terminus of INO80.

The protein localises to the nucleus. In terms of biological role, appears to promote apoptosis in a p53/TP53-independent manner. Putative regulatory component of the chromatin remodeling INO80 complex which is involved in transcriptional regulation, DNA replication and probably DNA repair. This is TCF3 fusion partner homolog (Tfpt) from Mus musculus (Mouse).